Consider the following 376-residue polypeptide: MFLTGFDAPTLNTLWVDKNLSEHTLIQAFSRTNRCFGETKKFGNIFSFRDIRENFDQALKMYADKRGLKDIKSNMVMREFEEVFEKFKDWTEKIKQKYPNPDEILNLEKEEKWDFSDLFGEFLGDYRTVKSYHEFDKDNPYLPSDEFNKYFAAFSQIQEEIRKEKAEKKALEVQEEDLSNEVRKEPQIFSWEYGEGIQANLDYIFHLIKDLYNCDNEQDRQKVLDKIKTAIRTNPEIQVNEDILNEFIEDLGKSFEKEKLEEVWKTEGKLRECLKDFCKKKEESNKKKIINDFLVKGVFLVEWVADKQLNTAKKKGEYSPSWSDTEKLIWKEKSTNLPTMTEKDEDGNFKWRKLITDISEAFKNHFERFIRFVEIR.

The N-terminal section of a putative type I restriction enzyme that if reconstituted might recognize 5'-GAN(7)TAY-3' and cleave a random distance away. Subunit R is required for both nuclease and ATPase activities, but not for modification. This chain is Putative type I restriction enzyme MpnIIP endonuclease subunit N-terminal part, found in Mycoplasma pneumoniae (strain ATCC 29342 / M129 / Subtype 1) (Mycoplasmoides pneumoniae).